Reading from the N-terminus, the 127-residue chain is Protein ApaG (127 aa).

The ApaG domain maps to Glu3–His127.

This Nitrosospira multiformis (strain ATCC 25196 / NCIMB 11849 / C 71) protein is Protein ApaG.